The chain runs to 298 residues: Glyoxalase domain-containing protein 4 (298 aa).

Residues 5–130 form the VOC 1 domain; it reads RALHFVFKVK…GGYKFYLQDR (126 aa). Position 109 is an N6-succinyllysine (lysine 109). Serine 131 carries the phosphoserine modification. The region spanning 137 to 258 is the VOC 2 domain; the sequence is PVLKVTLAVS…DGHEICFVGD (122 aa). Lysine 273 carries the post-translational modification N6-succinyllysine.

It belongs to the glyoxalase I family. Interacts with NUDT9.

The protein resides in the mitochondrion. The sequence is that of Glyoxalase domain-containing protein 4 (Glod4) from Mus musculus (Mouse).